The primary structure comprises 129 residues: Large ribosomal subunit protein bL12c (129 aa).

Belongs to the bacterial ribosomal protein bL12 family. As to quaternary structure, homodimer. Part of the ribosomal stalk of the 50S ribosomal subunit. Forms a multimeric L10(L12)X complex, where L10 forms an elongated spine to which 2 to 4 L12 dimers bind in a sequential fashion. Binds GTP-bound translation factors.

The protein localises to the plastid. The protein resides in the chloroplast. In terms of biological role, forms part of the ribosomal stalk which helps the ribosome interact with GTP-bound translation factors. Is thus essential for accurate translation. The protein is Large ribosomal subunit protein bL12c of Oltmannsiellopsis viridis (Marine flagellate).